The primary structure comprises 369 residues: Nuclear pore complex-interacting protein family member A2 (369 aa).

The disordered stretch occupies residues 325–346 (KTPPECLLTPLPPSAPPSADDN).

The protein belongs to the NPIP family.

This is Nuclear pore complex-interacting protein family member A2 (NPIPA2) from Homo sapiens (Human).